The primary structure comprises 537 residues: Chaperonin GroEL (537 aa).

Residues 29 to 32, 86 to 90, Gly-413, and Asp-492 each bind ATP; these read TLGP and DGTTT.

Belongs to the chaperonin (HSP60) family. In terms of assembly, forms a cylinder of 14 subunits composed of two heptameric rings stacked back-to-back. Interacts with the co-chaperonin GroES.

The protein localises to the cytoplasm. It catalyses the reaction ATP + H2O + a folded polypeptide = ADP + phosphate + an unfolded polypeptide.. Its function is as follows. Together with its co-chaperonin GroES, plays an essential role in assisting protein folding. The GroEL-GroES system forms a nano-cage that allows encapsulation of the non-native substrate proteins and provides a physical environment optimized to promote and accelerate protein folding. This chain is Chaperonin GroEL, found in Dehalococcoides mccartyi (strain CBDB1).